Here is a 312-residue protein sequence, read N- to C-terminus: UDP-N-acetylenolpyruvoylglucosamine reductase (312 aa).

In terms of domain architecture, FAD-binding PCMH-type spans 24–206 (GIGGPADLFA…SADILKVRNE (183 aa)). Residue Arg166 is part of the active site. Ser217 acts as the Proton donor in catalysis. Glu307 is a catalytic residue.

It belongs to the MurB family. It depends on FAD as a cofactor.

It localises to the cytoplasm. The catalysed reaction is UDP-N-acetyl-alpha-D-muramate + NADP(+) = UDP-N-acetyl-3-O-(1-carboxyvinyl)-alpha-D-glucosamine + NADPH + H(+). The protein operates within cell wall biogenesis; peptidoglycan biosynthesis. Its function is as follows. Cell wall formation. The protein is UDP-N-acetylenolpyruvoylglucosamine reductase of Solibacter usitatus (strain Ellin6076).